A 496-amino-acid polypeptide reads, in one-letter code: Probable cytosol aminopeptidase (496 aa).

Residues Lys264 and Asp269 each contribute to the Mn(2+) site. Residue Lys276 is part of the active site. Mn(2+) is bound by residues Asp287, Asp346, and Glu348. The active site involves Arg350.

The protein belongs to the peptidase M17 family. The cofactor is Mn(2+).

The protein localises to the cytoplasm. It catalyses the reaction Release of an N-terminal amino acid, Xaa-|-Yaa-, in which Xaa is preferably Leu, but may be other amino acids including Pro although not Arg or Lys, and Yaa may be Pro. Amino acid amides and methyl esters are also readily hydrolyzed, but rates on arylamides are exceedingly low.. It carries out the reaction Release of an N-terminal amino acid, preferentially leucine, but not glutamic or aspartic acids.. Functionally, presumably involved in the processing and regular turnover of intracellular proteins. Catalyzes the removal of unsubstituted N-terminal amino acids from various peptides. The protein is Probable cytosol aminopeptidase of Geobacter sulfurreducens (strain ATCC 51573 / DSM 12127 / PCA).